The following is an 81-amino-acid chain: Photosystem I iron-sulfur center (81 aa).

4Fe-4S ferredoxin-type domains follow at residues 2 to 31 and 37 to 68; these read SHSV…MVPW and GQIA…IRVY. C11, C14, C17, C21, C48, C51, C54, and C58 together coordinate [4Fe-4S] cluster.

In terms of assembly, the cyanobacterial PSI reaction center is composed of one copy each of PsaA,B,C,D,E,F,I,J,K,L,M and X, and forms trimeric complexes. It depends on [4Fe-4S] cluster as a cofactor.

It localises to the cellular thylakoid membrane. It catalyses the reaction reduced [plastocyanin] + hnu + oxidized [2Fe-2S]-[ferredoxin] = oxidized [plastocyanin] + reduced [2Fe-2S]-[ferredoxin]. Functionally, apoprotein for the two 4Fe-4S centers FA and FB of photosystem I (PSI); essential for photochemical activity. FB is the terminal electron acceptor of PSI, donating electrons to ferredoxin. The C-terminus interacts with PsaA/B/D and helps assemble the protein into the PSI complex. Required for binding of PsaD and PsaE to PSI. PSI is a plastocyanin/cytochrome c6-ferredoxin oxidoreductase, converting photonic excitation into a charge separation, which transfers an electron from the donor P700 chlorophyll pair to the spectroscopically characterized acceptors A0, A1, FX, FA and FB in turn. In terms of biological role, mutant proteins with a 3Fe-4S center are not observed bound to PSI in vitro, and are probably not able to do so in vivo. This chain is Photosystem I iron-sulfur center (psaC), found in Picosynechococcus sp. (strain ATCC 27264 / PCC 7002 / PR-6) (Agmenellum quadruplicatum).